The sequence spans 337 residues: Glucan endo-1,3-beta-glucosidase, basic isoform 1 (337 aa).

Catalysis depends on glutamate 94, which acts as the Proton donor. Glutamate 239 functions as the Nucleophile in the catalytic mechanism. The propeptide at 315-337 is removed in mature form; that stretch reads VSERVWDISAETNSTASSLISEM. Asparagine 327 carries N-linked (GlcNAc...) asparagine glycosylation.

Belongs to the glycosyl hydrolase 17 family.

It is found in the vacuole. It catalyses the reaction Hydrolysis of (1-&gt;3)-beta-D-glucosidic linkages in (1-&gt;3)-beta-D-glucans.. In terms of biological role, is thought to be an important plant defense-related product against fungal pathogens. The polypeptide is Glucan endo-1,3-beta-glucosidase, basic isoform 1 (GLUB1) (Solanum tuberosum (Potato)).